We begin with the raw amino-acid sequence, 304 residues long: Acetylglutamate kinase (304 aa).

Substrate is bound by residues 75 to 76 (GG), arginine 97, and asparagine 202.

Belongs to the acetylglutamate kinase family. ArgB subfamily.

It localises to the cytoplasm. It carries out the reaction N-acetyl-L-glutamate + ATP = N-acetyl-L-glutamyl 5-phosphate + ADP. The protein operates within amino-acid biosynthesis; L-arginine biosynthesis; N(2)-acetyl-L-ornithine from L-glutamate: step 2/4. In terms of biological role, catalyzes the ATP-dependent phosphorylation of N-acetyl-L-glutamate. The chain is Acetylglutamate kinase from Parvibaculum lavamentivorans (strain DS-1 / DSM 13023 / NCIMB 13966).